The chain runs to 346 residues: Phosphoribosylformylglycinamidine cyclo-ligase (346 aa).

Belongs to the AIR synthase family.

It is found in the cytoplasm. The enzyme catalyses 2-formamido-N(1)-(5-O-phospho-beta-D-ribosyl)acetamidine + ATP = 5-amino-1-(5-phospho-beta-D-ribosyl)imidazole + ADP + phosphate + H(+). It functions in the pathway purine metabolism; IMP biosynthesis via de novo pathway; 5-amino-1-(5-phospho-D-ribosyl)imidazole from N(2)-formyl-N(1)-(5-phospho-D-ribosyl)glycinamide: step 2/2. In Shewanella pealeana (strain ATCC 700345 / ANG-SQ1), this protein is Phosphoribosylformylglycinamidine cyclo-ligase.